A 279-amino-acid chain; its full sequence is Energy-coupling factor transporter ATP-binding protein EcfA1 (279 aa).

In terms of domain architecture, ABC transporter spans 6 to 240; sequence ISVDHLTYQY…GTQLVEMGLD (235 aa). An ATP-binding site is contributed by 40-47; it reads GHNGSGKS.

Belongs to the ABC transporter superfamily. Energy-coupling factor EcfA family. Forms a stable energy-coupling factor (ECF) transporter complex composed of 2 membrane-embedded substrate-binding proteins (S component), 2 ATP-binding proteins (A component) and 2 transmembrane proteins (T component).

The protein localises to the cell membrane. Functionally, ATP-binding (A) component of a common energy-coupling factor (ECF) ABC-transporter complex. Unlike classic ABC transporters this ECF transporter provides the energy necessary to transport a number of different substrates. The protein is Energy-coupling factor transporter ATP-binding protein EcfA1 of Levilactobacillus brevis (strain ATCC 367 / BCRC 12310 / CIP 105137 / JCM 1170 / LMG 11437 / NCIMB 947 / NCTC 947) (Lactobacillus brevis).